We begin with the raw amino-acid sequence, 240 residues long: MKILLIGYGAMNQRVARLAEEKGHEIVGVIENTPKATTPYQQYQHIADVKDADVAIDFSNPNLLFPLLDEEFHLPLVVATTGEKEKLLNKLDELSQNIPVFFSANMSYGVHALTKILAAAVPLLDEFDIELTEAHHNKKVDAPSGTLEKLYDVIVSLKENVTPVYDRHELNEKRQPQDIGIHSIRGGTIVGEHEVLFAGTDETIQITHRAQSKDIFANGAIQAAERLVNKPNGFYTFDNL.

NAD(+) contacts are provided by residues 79–81 and 103–106; these read ATT and SANM. His-135 functions as the Proton donor/acceptor in the catalytic mechanism. A (S)-2,3,4,5-tetrahydrodipicolinate-binding site is contributed by His-136. Lys-139 serves as the catalytic Proton donor. 145–146 provides a ligand contact to (S)-2,3,4,5-tetrahydrodipicolinate; the sequence is GT.

This sequence belongs to the DapB family.

It is found in the cytoplasm. The catalysed reaction is (S)-2,3,4,5-tetrahydrodipicolinate + NAD(+) + H2O = (2S,4S)-4-hydroxy-2,3,4,5-tetrahydrodipicolinate + NADH + H(+). The enzyme catalyses (S)-2,3,4,5-tetrahydrodipicolinate + NADP(+) + H2O = (2S,4S)-4-hydroxy-2,3,4,5-tetrahydrodipicolinate + NADPH + H(+). It functions in the pathway amino-acid biosynthesis; L-lysine biosynthesis via DAP pathway; (S)-tetrahydrodipicolinate from L-aspartate: step 4/4. Functionally, catalyzes the conversion of 4-hydroxy-tetrahydrodipicolinate (HTPA) to tetrahydrodipicolinate. The protein is 4-hydroxy-tetrahydrodipicolinate reductase of Staphylococcus aureus (strain MSSA476).